The primary structure comprises 813 residues: Kinesin-like protein KIN-8B (813 aa).

The Kinesin motor domain maps to 14-345; sequence TLTVAVKCRP…LKYADRAKEI (332 aa). 104–111 contributes to the ATP binding site; it reads GSTGSGKT. Positions 349-391 form a coiled coil; the sequence is IQKNIGTIDTHMSDYQRMIDNLQSEVSQLKTQLAEKESQLSIK. 2 disordered regions span residues 664–694 and 756–813; these read GSRP…PRMA and AVST…RQHQ. Composition is skewed to polar residues over residues 682–694, 761–791, and 804–813; these read YPQT…PRMA, GARN…NSHT, and KGNNTQRQHQ.

It belongs to the TRAFAC class myosin-kinesin ATPase superfamily. Kinesin family. KIN-8 subfamily.

The polypeptide is Kinesin-like protein KIN-8B (Arabidopsis thaliana (Mouse-ear cress)).